We begin with the raw amino-acid sequence, 759 residues long: Catalase-peroxidase (759 aa).

Residues 1-24 (MTQDKCPFKEQSSQPNFAGGGTSN) form a disordered region. Residues 96–242 (WHSAGTYRVF…LAAAHMGLIY (147 aa)) constitute a cross-link (tryptophyl-tyrosyl-methioninium (Trp-Tyr) (with M-268)). Histidine 97 serves as the catalytic Proton acceptor. The tryptophyl-tyrosyl-methioninium (Tyr-Met) (with W-96) cross-link spans 242–268 (YVNPEGPDGNPDPVAAAHDIRDTFGRM). Histidine 283 lines the heme b pocket.

This sequence belongs to the peroxidase family. Peroxidase/catalase subfamily. Homodimer or homotetramer. It depends on heme b as a cofactor. Post-translationally, formation of the three residue Trp-Tyr-Met cross-link is important for the catalase, but not the peroxidase activity of the enzyme.

It localises to the cytoplasm. It catalyses the reaction H2O2 + AH2 = A + 2 H2O. The enzyme catalyses 2 H2O2 = O2 + 2 H2O. Its function is as follows. Bifunctional enzyme with both catalase and broad-spectrum peroxidase activity. This is Catalase-peroxidase from Aspergillus fumigatus (strain CBS 144.89 / FGSC A1163 / CEA10) (Neosartorya fumigata).